We begin with the raw amino-acid sequence, 107 residues long: Cell division protein FtsB (107 aa).

Topologically, residues 1-3 are cytoplasmic; sequence MGK. The chain crosses the membrane as a helical span at residues 4-21; it reads LTLLLLILLGWLQYSLWL. Residues 22-107 lie on the Periplasmic side of the membrane; it reads GKNGVHDFVR…IPSTQNNAQQ (86 aa). Residues 39–62 are a coiled coil; the sequence is QEVNNGKLKARNDQLFAEIDDLNG.

This sequence belongs to the FtsB family. In terms of assembly, part of a complex composed of FtsB, FtsL and FtsQ.

It localises to the cell inner membrane. In terms of biological role, essential cell division protein. May link together the upstream cell division proteins, which are predominantly cytoplasmic, with the downstream cell division proteins, which are predominantly periplasmic. This Yersinia enterocolitica serotype O:8 / biotype 1B (strain NCTC 13174 / 8081) protein is Cell division protein FtsB.